Reading from the N-terminus, the 270-residue chain is Phosphatidylglycerol--prolipoprotein diacylglyceryl transferase (270 aa).

4 helical membrane-spanning segments follow: residues 19–39 (FPVY…LWLA), 56–76 (LVLI…VIFE), 92–112 (QGGL…ILFA), and 116–136 (GVSF…GQAI). Arginine 138 is an a 1,2-diacyl-sn-glycero-3-phospho-(1'-sn-glycerol) binding site. The next 3 helical transmembrane spans lie at 178 to 198 (HPTF…LLAL), 206 to 226 (GELF…VEGL), and 236 to 256 (LRIA…FIIV).

Belongs to the Lgt family.

It is found in the cell membrane. The enzyme catalyses L-cysteinyl-[prolipoprotein] + a 1,2-diacyl-sn-glycero-3-phospho-(1'-sn-glycerol) = an S-1,2-diacyl-sn-glyceryl-L-cysteinyl-[prolipoprotein] + sn-glycerol 1-phosphate + H(+). It functions in the pathway protein modification; lipoprotein biosynthesis (diacylglyceryl transfer). Functionally, catalyzes the transfer of the diacylglyceryl group from phosphatidylglycerol to the sulfhydryl group of the N-terminal cysteine of a prolipoprotein, the first step in the formation of mature lipoproteins. This Bacillus cereus (strain G9842) protein is Phosphatidylglycerol--prolipoprotein diacylglyceryl transferase.